A 157-amino-acid chain; its full sequence is Small ribosomal subunit protein uS7 (157 aa).

This sequence belongs to the universal ribosomal protein uS7 family. Part of the 30S ribosomal subunit. Contacts proteins S9 and S11.

Functionally, one of the primary rRNA binding proteins, it binds directly to 16S rRNA where it nucleates assembly of the head domain of the 30S subunit. Is located at the subunit interface close to the decoding center, probably blocks exit of the E-site tRNA. The protein is Small ribosomal subunit protein uS7 of Borreliella afzelii (strain PKo) (Borrelia afzelii).